Here is a 351-residue protein sequence, read N- to C-terminus: Photosystem II D2 protein (351 aa).

The chain crosses the membrane as a helical span at residues 39 to 59; it reads TAYLSIGGWLTGTTFVTSWYT. Residue His-116 coordinates chlorophyll a. Residues 123–139 form a helical membrane-spanning segment; the sequence is GFMLRQFEIARLVGIRP. Pheophytin a contacts are provided by Gln-128 and Asn-141. A helical transmembrane segment spans residues 151-164; it reads VFVSVFLMYPLGQS. His-196 is a binding site for chlorophyll a. The chain crosses the membrane as a helical span at residues 206–226; the sequence is GALLCAIHGATVENTLFEDGE. A plastoquinone-binding residues include His-213 and Phe-260. His-213 lines the Fe cation pocket. His-267 is a Fe cation binding site. Residues 277-293 traverse the membrane as a helical segment; the sequence is GLWTSAIGIIGLALNLR.

This sequence belongs to the reaction center PufL/M/PsbA/D family. In terms of assembly, PSII is composed of 1 copy each of membrane proteins PsbA, PsbB, PsbC, PsbD, PsbE, PsbF, PsbH, PsbI, PsbJ, PsbK, PsbL, PsbM, PsbT, PsbX, PsbY, PsbZ, Psb30/Ycf12, peripheral proteins PsbO, CyanoQ (PsbQ), PsbU, PsbV and a large number of cofactors. It forms dimeric complexes. It depends on The D1/D2 heterodimer binds P680, chlorophylls that are the primary electron donor of PSII, and subsequent electron acceptors. It shares a non-heme iron and each subunit binds pheophytin, quinone, additional chlorophylls, carotenoids and lipids. There is also a Cl(-1) ion associated with D1 and D2, which is required for oxygen evolution. The PSII complex binds additional chlorophylls, carotenoids and specific lipids. as a cofactor.

It is found in the cellular thylakoid membrane. It catalyses the reaction 2 a plastoquinone + 4 hnu + 2 H2O = 2 a plastoquinol + O2. Functionally, photosystem II (PSII) is a light-driven water:plastoquinone oxidoreductase that uses light energy to abstract electrons from H(2)O, generating O(2) and a proton gradient subsequently used for ATP formation. It consists of a core antenna complex that captures photons, and an electron transfer chain that converts photonic excitation into a charge separation. The D1/D2 (PsbA/PsbD) reaction center heterodimer binds P680, the primary electron donor of PSII as well as several subsequent electron acceptors. D2 is needed for assembly of a stable PSII complex. In Synechococcus sp. (strain CC9311), this protein is Photosystem II D2 protein.